The following is a 219-amino-acid chain: C-type lectin domain family 4 member E (219 aa).

The Cytoplasmic portion of the chain corresponds to methionine 1–serine 19. The chain crosses the membrane as a helical; Signal-anchor for type II membrane protein span at residues glutamine 20–threonine 40. Over arginine 41 to leucine 219 the chain is Extracellular. An N-linked (GlcNAc...) asparagine glycan is attached at asparagine 62. An intrachain disulfide couples cysteine 80 to cysteine 91. In terms of domain architecture, C-type lectin spans phenylalanine 87–glutamate 206. Asparagine 107 is a glycosylation site (N-linked (GlcNAc...) asparagine). Cystine bridges form between cysteine 108–cysteine 205 and cysteine 179–cysteine 197. Ca(2+)-binding residues include valine 117, asparagine 119, glutamate 123, glutamate 169, asparagine 171, asparagine 193, aspartate 194, and glutamate 206. A Confers specificity for glucose/mannose-type carbohydrates motif is present at residues glutamate 169 to asparagine 171.

In terms of assembly, monomer and homodimer. Interacts with signaling adapter Fc receptor gamma chain/FCER1G to form a functional complex; the interaction is direct. Alternatively, acts as a bridge for interaction between CLEC4D and FCER1G. A heterodimer of CLEC4E and CLEC4D associates with FCER1G to form a functional complex. Interacts with SAP130 nuclear protein that is released from necrotic cells; the interaction is direct. As to expression, expressed in monocytes and macrophages.

Its subcellular location is the cell membrane. It is found in the cell projection. The protein localises to the phagocytic cup. Calcium-dependent lectin that acts as a pattern recognition receptor (PRR) of the innate immune system: recognizes damage-associated molecular patterns (DAMPs) of abnormal self and pathogen-associated molecular patterns (PAMPs) of bacteria and fungi. The PAMPs notably include mycobacterial trehalose 6,6'-dimycolate (TDM), a cell wall glycolipid with potent adjuvant immunomodulatory functions. Interacts with signaling adapter Fc receptor gamma chain/FCER1G to form a functional complex in myeloid cells. Binding of mycobacterial trehalose 6,6'-dimycolate (TDM) to this receptor complex leads to phosphorylation of the immunoreceptor tyrosine-based activation motif (ITAM) of FCER1G, triggering activation of SYK, CARD9 and NF-kappa-B, consequently driving maturation of antigen-presenting cells and shaping antigen-specific priming of T-cells toward effector T-helper 1 and T-helper 17 cell subtypes. Also recognizes alpha-mannose residues on pathogenic fungi of the genus Malassezia and mediates macrophage activation. Through recognition of DAMPs released upon nonhomeostatic cell death, enables immune sensing of damaged self and promotes inflammatory cell infiltration into the damaged tissue. The chain is C-type lectin domain family 4 member E from Homo sapiens (Human).